Reading from the N-terminus, the 1320-residue chain is Protein brunelleschi (1320 aa).

Positions 313–411 (HRNSSLQEAG…IPGHQRNGDL (99 aa)) are disordered. Over residues 314 to 327 (RNSSLQEAGTSPLK) the composition is skewed to polar residues. Ser-317 bears the Phosphoserine mark. Thr-329 is subject to Phosphothreonine. Basic and acidic residues predominate over residues 329–340 (TPEKWRASDATK). The span at 345-361 (SDATANNVDSNQPQQRV) shows a compositional bias: polar residues. A compositionally biased stretch (low complexity) spans 362–400 (TSNSSSCSSVSSLVTTATNSSASDTPTTSSSSTSTISAA). The residue at position 672 (Ser-672) is a Phosphoserine. Residues 923–954 (VSTSGHASLPSRVGSPHHRRNEPQNSSFRSTI) are disordered. Positions 945–954 (PQNSSFRSTI) are enriched in polar residues.

Belongs to the NIBP family. In terms of assembly, may be part of the multisubunit TRAPP (transport protein particle) complex.

The protein resides in the cytoplasm. It localises to the golgi apparatus. Functionally, cooperates with Rab11 and fwd/PI4K to mediate the flow of membrane through the Golgi, which is required to support cleavage furrow ingression, therefore promoting cytokinesis in male meiotic cells. The polypeptide is Protein brunelleschi (Drosophila melanogaster (Fruit fly)).